The sequence spans 357 residues: 3-isopropylmalate dehydrogenase (357 aa).

Substrate is bound by residues arginine 97, arginine 107, arginine 135, and aspartate 224. Mg(2+) contacts are provided by aspartate 224, aspartate 248, and aspartate 252. NAD(+) is bound at residue 282–294; the sequence is GSAPDIAGKNIAN.

This sequence belongs to the isocitrate and isopropylmalate dehydrogenases family. LeuB type 1 subfamily. In terms of assembly, homodimer. Mg(2+) serves as cofactor. Requires Mn(2+) as cofactor.

It localises to the cytoplasm. It catalyses the reaction (2R,3S)-3-isopropylmalate + NAD(+) = 4-methyl-2-oxopentanoate + CO2 + NADH. It functions in the pathway amino-acid biosynthesis; L-leucine biosynthesis; L-leucine from 3-methyl-2-oxobutanoate: step 3/4. Its function is as follows. Catalyzes the oxidation of 3-carboxy-2-hydroxy-4-methylpentanoate (3-isopropylmalate) to 3-carboxy-4-methyl-2-oxopentanoate. The product decarboxylates to 4-methyl-2 oxopentanoate. In Prochlorococcus marinus subsp. pastoris (strain CCMP1986 / NIES-2087 / MED4), this protein is 3-isopropylmalate dehydrogenase.